A 356-amino-acid chain; its full sequence is GDSL esterase/lipase At5g37690 (356 aa).

Positions 1-18 (MMILRLALAIVISTYATA) are cleaved as a signal peptide. The active-site Nucleophile is Ser-34. 2 N-linked (GlcNAc...) asparagine glycosylation sites follow: Asn-116 and Asn-291. Catalysis depends on residues Asp-322 and His-325.

This sequence belongs to the 'GDSL' lipolytic enzyme family.

It is found in the secreted. In Arabidopsis thaliana (Mouse-ear cress), this protein is GDSL esterase/lipase At5g37690.